The sequence spans 270 residues: UPF0246 protein PsycPRwf_0637 (270 aa).

The protein belongs to the UPF0246 family.

The protein is UPF0246 protein PsycPRwf_0637 of Psychrobacter sp. (strain PRwf-1).